Reading from the N-terminus, the 390-residue chain is Phosphopentomutase (390 aa).

6 residues coordinate Mn(2+): Asp-11, Asp-283, His-288, Asp-324, His-325, and His-336.

The protein belongs to the phosphopentomutase family. Mn(2+) serves as cofactor.

The protein localises to the cytoplasm. It catalyses the reaction 2-deoxy-alpha-D-ribose 1-phosphate = 2-deoxy-D-ribose 5-phosphate. The catalysed reaction is alpha-D-ribose 1-phosphate = D-ribose 5-phosphate. Its pathway is carbohydrate degradation; 2-deoxy-D-ribose 1-phosphate degradation; D-glyceraldehyde 3-phosphate and acetaldehyde from 2-deoxy-alpha-D-ribose 1-phosphate: step 1/2. In terms of biological role, isomerase that catalyzes the conversion of deoxy-ribose 1-phosphate (dRib-1-P) and ribose 1-phosphate (Rib-1-P) to deoxy-ribose 5-phosphate (dRib-5-P) and ribose 5-phosphate (Rib-5-P), respectively. This chain is Phosphopentomutase, found in Alkaliphilus metalliredigens (strain QYMF).